A 312-amino-acid chain; its full sequence is DNA-directed RNA polymerase subunit alpha (312 aa).

The alpha N-terminal domain (alpha-NTD) stretch occupies residues 1-226 (MIEFEKPRIE…EHLDIFVNLT (226 aa)). An alpha C-terminal domain (alpha-CTD) region spans residues 243–312 (KEKMLEMTIE…DLGLGLRKDD (70 aa)).

The protein belongs to the RNA polymerase alpha chain family. In terms of assembly, homodimer. The RNAP catalytic core consists of 2 alpha, 1 beta, 1 beta' and 1 omega subunit. When a sigma factor is associated with the core the holoenzyme is formed, which can initiate transcription.

It carries out the reaction RNA(n) + a ribonucleoside 5'-triphosphate = RNA(n+1) + diphosphate. In terms of biological role, DNA-dependent RNA polymerase catalyzes the transcription of DNA into RNA using the four ribonucleoside triphosphates as substrates. This Enterococcus faecalis (strain ATCC 700802 / V583) protein is DNA-directed RNA polymerase subunit alpha.